The sequence spans 110 residues: NADH-quinone oxidoreductase subunit K (110 aa).

Transmembrane regions (helical) follow at residues 13–33 (LNHY…GLFM), 41–61 (ILMS…AFSI), and 73–93 (IIIL…LLIY).

This sequence belongs to the complex I subunit 4L family. In terms of assembly, NDH-1 is composed of 14 different subunits. Subunits NuoA, H, J, K, L, M, N constitute the membrane sector of the complex.

The protein localises to the cell inner membrane. The enzyme catalyses a quinone + NADH + 5 H(+)(in) = a quinol + NAD(+) + 4 H(+)(out). Functionally, NDH-1 shuttles electrons from NADH, via FMN and iron-sulfur (Fe-S) centers, to quinones in the respiratory chain. The immediate electron acceptor for the enzyme in this species is believed to be ubiquinone. Couples the redox reaction to proton translocation (for every two electrons transferred, four hydrogen ions are translocated across the cytoplasmic membrane), and thus conserves the redox energy in a proton gradient. The protein is NADH-quinone oxidoreductase subunit K of Rickettsia felis (strain ATCC VR-1525 / URRWXCal2) (Rickettsia azadi).